The sequence spans 44 residues: Protein PsbN (44 aa).

Residues 6–26 (FFFTFFLWFLLLSVTGYSVYV) traverse the membrane as a helical segment.

It belongs to the PsbN family.

The protein resides in the plastid. It is found in the chloroplast thylakoid membrane. Its function is as follows. May play a role in photosystem I and II biogenesis. This chain is Protein PsbN, found in Chlamydomonas reinhardtii (Chlamydomonas smithii).